The following is an 89-amino-acid chain: Small ribosomal subunit protein uS15 (89 aa).

It belongs to the universal ribosomal protein uS15 family. Part of the 30S ribosomal subunit. Forms a bridge to the 50S subunit in the 70S ribosome, contacting the 23S rRNA.

Its function is as follows. One of the primary rRNA binding proteins, it binds directly to 16S rRNA where it helps nucleate assembly of the platform of the 30S subunit by binding and bridging several RNA helices of the 16S rRNA. Forms an intersubunit bridge (bridge B4) with the 23S rRNA of the 50S subunit in the ribosome. This Roseiflexus castenholzii (strain DSM 13941 / HLO8) protein is Small ribosomal subunit protein uS15.